Consider the following 242-residue polypeptide: Biosynthetic peptidoglycan transglycosylase (242 aa).

A helical transmembrane segment spans residues 19–39; it reads LMVVLAVFWGGGIALFSVAPV.

This sequence belongs to the glycosyltransferase 51 family.

Its subcellular location is the cell inner membrane. The enzyme catalyses [GlcNAc-(1-&gt;4)-Mur2Ac(oyl-L-Ala-gamma-D-Glu-L-Lys-D-Ala-D-Ala)](n)-di-trans,octa-cis-undecaprenyl diphosphate + beta-D-GlcNAc-(1-&gt;4)-Mur2Ac(oyl-L-Ala-gamma-D-Glu-L-Lys-D-Ala-D-Ala)-di-trans,octa-cis-undecaprenyl diphosphate = [GlcNAc-(1-&gt;4)-Mur2Ac(oyl-L-Ala-gamma-D-Glu-L-Lys-D-Ala-D-Ala)](n+1)-di-trans,octa-cis-undecaprenyl diphosphate + di-trans,octa-cis-undecaprenyl diphosphate + H(+). Its pathway is cell wall biogenesis; peptidoglycan biosynthesis. Functionally, peptidoglycan polymerase that catalyzes glycan chain elongation from lipid-linked precursors. In Escherichia coli O157:H7, this protein is Biosynthetic peptidoglycan transglycosylase.